A 638-amino-acid chain; its full sequence is tRNA uridine 5-carboxymethylaminomethyl modification enzyme MnmG (638 aa).

Residues 13–18, Val125, and Ser180 each bind FAD; that span reads GGGHAG. 273–287 contacts NAD(+); the sequence is GPRYCPSIEDKIHRF. Position 370 (Gln370) interacts with FAD.

Belongs to the MnmG family. In terms of assembly, homodimer. Heterotetramer of two MnmE and two MnmG subunits. FAD is required as a cofactor.

The protein resides in the cytoplasm. In terms of biological role, NAD-binding protein involved in the addition of a carboxymethylaminomethyl (cmnm) group at the wobble position (U34) of certain tRNAs, forming tRNA-cmnm(5)s(2)U34. The polypeptide is tRNA uridine 5-carboxymethylaminomethyl modification enzyme MnmG (Cellvibrio japonicus (strain Ueda107) (Pseudomonas fluorescens subsp. cellulosa)).